We begin with the raw amino-acid sequence, 345 residues long: Phosphoribosylformylglycinamidine cyclo-ligase (345 aa).

It belongs to the AIR synthase family.

Its subcellular location is the cytoplasm. It catalyses the reaction 2-formamido-N(1)-(5-O-phospho-beta-D-ribosyl)acetamidine + ATP = 5-amino-1-(5-phospho-beta-D-ribosyl)imidazole + ADP + phosphate + H(+). The protein operates within purine metabolism; IMP biosynthesis via de novo pathway; 5-amino-1-(5-phospho-D-ribosyl)imidazole from N(2)-formyl-N(1)-(5-phospho-D-ribosyl)glycinamide: step 2/2. The protein is Phosphoribosylformylglycinamidine cyclo-ligase of Shewanella sp. (strain MR-7).